The following is a 492-amino-acid chain: Sestrin-3 (492 aa).

The interval 62–243 (LVEEYSTSGR…VCDLANDNSI (182 aa)) is N-terminal domain; may mediate the alkylhydroperoxide reductase activity. Residue cysteine 121 is the Cysteine sulfenic acid (-SOH) intermediate of the active site. The C-terminal domain; mediates TORC1 regulation stretch occupies residues 310 to 492 (PHSDFEDDVI…ALRAITRHLT (183 aa)). Residues 386 to 389 (TYNT), threonine 398, and glutamate 463 each bind L-leucine.

The protein belongs to the sestrin family. Interacts with the GATOR2 complex which is composed of MIOS, SEC13, SEH1L, WDR24 and WDR59; the interaction is not regulated by leucine. Interacts with RRAGA, RRAGB, RRAGC and RRAGD; may function as a guanine nucleotide dissociation inhibitor for RRAGs and regulate them. Interacts with the TORC2 complex; through RICTOR. In terms of tissue distribution, detected in liver and skeletal muscles.

It localises to the cytoplasm. It carries out the reaction a hydroperoxide + L-cysteinyl-[protein] = S-hydroxy-L-cysteinyl-[protein] + an alcohol. May function as an intracellular leucine sensor that negatively regulates the TORC1 signaling pathway. May also regulate the insulin-receptor signaling pathway through activation of TORC2. This metabolic regulator may also play a role in protection against oxidative and genotoxic stresses. May prevent the accumulation of reactive oxygen species (ROS) through the alkylhydroperoxide reductase activity born by the N-terminal domain of the protein. The sequence is that of Sestrin-3 from Mus musculus (Mouse).